The primary structure comprises 266 residues: MENQEVVNQLAGFEVKVSGQPLSKLPEDLYIPPDALRVFLEAFEGPLDLLLYLIKKHNIDILDIPIAEITRQYMQFVDLMREMRIELAAEYLVMAAMLAEIKSRLLLPRPVVEEENEQDPRAELVRRLQEYERYKKAAYDLDQLPRVGRDTFIADAAVPPMNTAKIHPTAELPELLNALKDVLQRASLYNAHSIAREPLSIRERMSRILSLVDKENFIAFTRLFTVEEGRMGVVVTLIATLELIRQSVIELVQAEPFALIHIRAKG.

Belongs to the ScpA family. As to quaternary structure, component of a cohesin-like complex composed of ScpA, ScpB and the Smc homodimer, in which ScpA and ScpB bind to the head domain of Smc. The presence of the three proteins is required for the association of the complex with DNA.

The protein localises to the cytoplasm. Participates in chromosomal partition during cell division. May act via the formation of a condensin-like complex containing Smc and ScpB that pull DNA away from mid-cell into both cell halves. This Coxiella burnetii (strain RSA 493 / Nine Mile phase I) protein is Segregation and condensation protein A.